The primary structure comprises 185 residues: Photosystem I assembly protein Ycf4 (185 aa).

A run of 2 helical transmembrane segments spans residues 21–43 (NFFW…ISSY) and 68–90 (FYGI…NVGS).

The protein belongs to the Ycf4 family.

It is found in the plastid. Its subcellular location is the chloroplast thylakoid membrane. Functionally, seems to be required for the assembly of the photosystem I complex. The polypeptide is Photosystem I assembly protein Ycf4 (Aegilops tauschii (Tausch's goatgrass)).